A 247-amino-acid chain; its full sequence is MyoD family inhibitor domain-containing protein (247 aa).

Disordered regions lie at residues 1–67 (MSCA…NPSA) and 80–110 (QLQTSAQEPGKEETGKIKNGGHTRMSNGNGI). The MDFI domain occupies 74–247 (QPERLPQLQT…MECCGICFPS (174 aa)). 2 positions are modified to phosphoserine: serine 129 and serine 141.

It belongs to the MDFI family. In terms of assembly, interacts with HAND1; the interaction sequesters Hand1 into the nucleolus and inhibits its activity. Interacts (via C-terminus) with ZIC2. Interacts (via C-terminus) with AXIN1, the histidine-rich region of CCNT1/cyclin-T and weakly with LEF1. Interacts with CCNT2. Interacts with GATA2. Interacts (via C-terminus) with Piezo channel composed of PIEZO1 or PIEZO2; the interaction prolongs Piezo channel inactivation. Palmitoylated. In terms of tissue distribution, in the embryo, robust expression is detected between 16.5 and 18.5 dpc in lung, kidney, and salivary glands. In the developing cardiovascular system, it is detected in lymphatic and cardiac valves (at protein level).

Its subcellular location is the cytoplasm. The protein resides in the secreted. Its function is as follows. Required to control the activity of various transcription factors through their sequestration in the cytoplasm. Retains nuclear Zic proteins ZIC1, ZIC2 and ZIC3 in the cytoplasm and inhibits their transcriptional activation. Modulates the expression from cellular promoters. Binds to the axin complex, resulting in an increase in the level of free beta-catenin. Affects axin-regulation of the WNT and JNK signaling pathways. Involved in the development of lymphatic vessel valves. Required to promote lymphatic endothelial cell migration, in a process that involves down-regulation of integrin beta 1 activation and control of cell adhesion to the extracellular matrix. Regulates the activity of mechanosensitive Piezo channel. The sequence is that of MyoD family inhibitor domain-containing protein from Mus musculus (Mouse).